The primary structure comprises 334 residues: Replication factor C small subunit (334 aa).

Gly49 to Thr56 serves as a coordination point for ATP.

It belongs to the activator 1 small subunits family. RfcS subfamily. As to quaternary structure, heteromultimer composed of small subunits (RfcS) and large subunits (RfcL).

Functionally, part of the RFC clamp loader complex which loads the PCNA sliding clamp onto DNA. In Methanosarcina barkeri (strain Fusaro / DSM 804), this protein is Replication factor C small subunit.